Reading from the N-terminus, the 682-residue chain is Potassium-transporting ATPase ATP-binding subunit (682 aa).

4 helical membrane-spanning segments follow: residues 35–55, 62–82, 219–239, and 254–274; these read VMFI…AMAG, ATFT…ANFA, IALT…TATI, and VLVA…LSAI. D307 (4-aspartylphosphate intermediate) is an active-site residue. Residues D344, E348, 377–384, and K395 each bind ATP; that span reads FTAQTRMS. Mg(2+)-binding residues include D518 and D522. 3 helical membrane-spanning segments follow: residues 588–608, 616–636, and 656–676; these read FAII…LNVM, AILS…PLAL, and IYGL…DLLL.

Belongs to the cation transport ATPase (P-type) (TC 3.A.3) family. Type IA subfamily. The system is composed of three essential subunits: KdpA, KdpB and KdpC.

The protein localises to the cell inner membrane. It catalyses the reaction K(+)(out) + ATP + H2O = K(+)(in) + ADP + phosphate + H(+). Part of the high-affinity ATP-driven potassium transport (or Kdp) system, which catalyzes the hydrolysis of ATP coupled with the electrogenic transport of potassium into the cytoplasm. This subunit is responsible for energy coupling to the transport system and for the release of the potassium ions to the cytoplasm. The sequence is that of Potassium-transporting ATPase ATP-binding subunit from Klebsiella pneumoniae subsp. pneumoniae (strain ATCC 700721 / MGH 78578).